A 710-amino-acid polypeptide reads, in one-letter code: Dynein axonemal assembly factor 3 homolog (710 aa).

The disordered stretch occupies residues 403-487 (GAEAGAGAGP…DSDPAAAAST (85 aa)). A compositionally biased stretch (gly residues) spans 404–416 (AEAGAGAGPGGEA). The segment covering 417-438 (AAGASSSSGKEEAAAAAAAGKE) has biased composition (low complexity). A compositionally biased stretch (gly residues) spans 453 to 462 (SGSGAPGAGT). Positions 478 to 487 (DSDPAAAAST) are enriched in low complexity.

This sequence belongs to the DNAAF3 family.

It localises to the cytoplasm. Required for the assembly of axonemal inner and outer dynein arms. Involved in preassembly of dyneins into complexes before their transport into cilia. This Chlamydomonas reinhardtii (Chlamydomonas smithii) protein is Dynein axonemal assembly factor 3 homolog (DAB1).